The following is a 363-amino-acid chain: Peptide chain release factor 1 (363 aa).

Gln-237 is modified (N5-methylglutamine). The span at 284–296 shows a compositional bias: basic and acidic residues; the sequence is EDEKRRSAEESTR. The interval 284-305 is disordered; it reads EDEKRRSAEESTRRSLVASGDR.

It belongs to the prokaryotic/mitochondrial release factor family. Post-translationally, methylated by PrmC. Methylation increases the termination efficiency of RF1.

It is found in the cytoplasm. Its function is as follows. Peptide chain release factor 1 directs the termination of translation in response to the peptide chain termination codons UAG and UAA. The protein is Peptide chain release factor 1 of Shewanella sp. (strain MR-4).